The primary structure comprises 237 residues: Ras-related protein Rab-23 (237 aa).

Residue A19 coordinates GDP. Positions 20, 21, 22, 23, and 24 each coordinate GTP. GDP contacts are provided by G21, K22, S23, S24, and D37. S23 serves as a coordination point for Mg(2+). The Switch 1 signature appears at 28–46 (RYCKGIFTKDYKKTIGVDF). Y38 is a GTP binding site. K40 is a GDP binding site. Position 41 (T41) interacts with GTP. Mg(2+) is bound by residues T41 and D64. The Switch 2 signature appears at 65–84 (TAGQEEFDAITKAYYRGAQA). 7 residues coordinate GTP: G67, N121, K122, D124, S151, V152, and K153. Residues N121, K122, and D124 each coordinate GDP. V152 and K153 together coordinate GDP. A phosphoserine mark is found at S186 and S187. The segment at 204 to 237 (QNSSSLNGGDVINLRPNKQRTKRTRNPFSSCSVP) is disordered. At C234 the chain carries Cysteine methyl ester. C234 carries the S-geranylgeranyl cysteine lipid modification. A propeptide spans 235 to 237 (SVP) (removed in mature form).

Belongs to the small GTPase superfamily. Rab family. Interacts with SUFU. The cofactor is Mg(2+). Detected in brain neurons (at protein level). Forebrain and midbrain.

The protein resides in the cell membrane. It is found in the cytoplasm. The protein localises to the endosome membrane. Its subcellular location is the cytoplasmic vesicle. It localises to the autophagosome. The protein resides in the phagosome. It is found in the phagosome membrane. The enzyme catalyses GTP + H2O = GDP + phosphate + H(+). Its activity is regulated as follows. Regulated by guanine nucleotide exchange factors (GEFs) which promote the exchange of bound GDP for free GTP. Regulated by GTPase activating proteins (GAPs) which increase the GTP hydrolysis activity. Inhibited by GDP dissociation inhibitors (GDIs). Functionally, the small GTPases Rab are key regulators of intracellular membrane trafficking, from the formation of transport vesicles to their fusion with membranes. Rabs cycle between an inactive GDP-bound form and an active GTP-bound form that is able to recruit to membranes different set of downstream effectors directly responsible for vesicle formation, movement, tethering and fusion. Plays a role in autophagic vacuole assembly, and mediates defense against pathogens, such as S.aureus, by promoting their capture by autophagosomes that then merge with lysosomes. Together with SUFU, prevents nuclear import of GLI1, and thereby inhibits GLI1 transcription factor activity. Regulates GLI1 in differentiating chondrocytes. Likewise, regulates GLI3 proteolytic processing and modulates GLI2 and GLI3 transcription factor activity. The chain is Ras-related protein Rab-23 from Mus musculus (Mouse).